Reading from the N-terminus, the 144-residue chain is Large ribosomal subunit protein uL16 (144 aa).

The protein belongs to the universal ribosomal protein uL16 family. In terms of assembly, part of the 50S ribosomal subunit.

In terms of biological role, binds 23S rRNA and is also seen to make contacts with the A and possibly P site tRNAs. The sequence is that of Large ribosomal subunit protein uL16 from Latilactobacillus sakei subsp. sakei (strain 23K) (Lactobacillus sakei subsp. sakei).